The chain runs to 642 residues: Threonine--tRNA ligase (642 aa).

In terms of domain architecture, TGS spans 1-65; it reads MSDIITVTLP…DEDVKLQIFT (65 aa). Positions 248 to 541 are catalytic; the sequence is DHRKLGKELD…LIEHFAGAFP (294 aa). Residues Cys342, His393, and His518 each contribute to the Zn(2+) site.

It belongs to the class-II aminoacyl-tRNA synthetase family. In terms of assembly, homodimer. Requires Zn(2+) as cofactor.

The protein localises to the cytoplasm. It carries out the reaction tRNA(Thr) + L-threonine + ATP = L-threonyl-tRNA(Thr) + AMP + diphosphate + H(+). Functionally, catalyzes the attachment of threonine to tRNA(Thr) in a two-step reaction: L-threonine is first activated by ATP to form Thr-AMP and then transferred to the acceptor end of tRNA(Thr). Also edits incorrectly charged L-seryl-tRNA(Thr). The protein is Threonine--tRNA ligase of Myxococcus xanthus (strain DK1622).